We begin with the raw amino-acid sequence, 574 residues long: Desiccation/radiation resistance protein DR_1769 (574 aa).

The signal sequence occupies residues 1–33 (MPDPAARRFSLPPFPLAALALSVALLGAPASLA). Residues 400 to 438 (TAQTQARQAAAAASTSQQPRLPTLAQAPAPTPAPAQTTP) show a composition bias toward low complexity. Positions 400–461 (TAQTQARQAA…APVPPVASPA (62 aa)) are disordered. A compositionally biased stretch (pro residues) spans 439 to 459 (RPQPTPAQPATPAAPVPPVAS).

Functionally, plays an important role in resistance to desiccation and radiation, maybe by protecting genome integrity under extreme conditions. In Deinococcus radiodurans (strain ATCC 13939 / DSM 20539 / JCM 16871 / CCUG 27074 / LMG 4051 / NBRC 15346 / NCIMB 9279 / VKM B-1422 / R1), this protein is Desiccation/radiation resistance protein DR_1769.